The primary structure comprises 157 residues: SsrA-binding protein (157 aa).

It belongs to the SmpB family.

It is found in the cytoplasm. Functionally, required for rescue of stalled ribosomes mediated by trans-translation. Binds to transfer-messenger RNA (tmRNA), required for stable association of tmRNA with ribosomes. tmRNA and SmpB together mimic tRNA shape, replacing the anticodon stem-loop with SmpB. tmRNA is encoded by the ssrA gene; the 2 termini fold to resemble tRNA(Ala) and it encodes a 'tag peptide', a short internal open reading frame. During trans-translation Ala-aminoacylated tmRNA acts like a tRNA, entering the A-site of stalled ribosomes, displacing the stalled mRNA. The ribosome then switches to translate the ORF on the tmRNA; the nascent peptide is terminated with the 'tag peptide' encoded by the tmRNA and targeted for degradation. The ribosome is freed to recommence translation, which seems to be the essential function of trans-translation. The chain is SsrA-binding protein from Levilactobacillus brevis (strain ATCC 367 / BCRC 12310 / CIP 105137 / JCM 1170 / LMG 11437 / NCIMB 947 / NCTC 947) (Lactobacillus brevis).